Here is a 98-residue protein sequence, read N- to C-terminus: NADH-ubiquinone oxidoreductase chain 4L (98 aa).

The next 3 membrane-spanning stretches (helical) occupy residues 1–21 (MTLT…GMLT), 27–47 (VASL…ATLI), and 61–81 (IILL…LISI).

It belongs to the complex I subunit 4L family. As to quaternary structure, core subunit of respiratory chain NADH dehydrogenase (Complex I) which is composed of 45 different subunits.

Its subcellular location is the mitochondrion inner membrane. It catalyses the reaction a ubiquinone + NADH + 5 H(+)(in) = a ubiquinol + NAD(+) + 4 H(+)(out). Functionally, core subunit of the mitochondrial membrane respiratory chain NADH dehydrogenase (Complex I) which catalyzes electron transfer from NADH through the respiratory chain, using ubiquinone as an electron acceptor. Part of the enzyme membrane arm which is embedded in the lipid bilayer and involved in proton translocation. In Macaca mulatta (Rhesus macaque), this protein is NADH-ubiquinone oxidoreductase chain 4L (MT-ND4L).